Here is a 92-residue protein sequence, read N- to C-terminus: PqqA binding protein (92 aa).

Belongs to the PqqD family. In terms of assembly, monomer. Interacts with PqqE.

It functions in the pathway cofactor biosynthesis; pyrroloquinoline quinone biosynthesis. Its function is as follows. Functions as a PqqA binding protein and presents PqqA to PqqE, in the pyrroloquinoline quinone (PQQ) biosynthetic pathway. The sequence is that of PqqA binding protein from Xanthomonas oryzae pv. oryzae (strain PXO99A).